Reading from the N-terminus, the 1595-residue chain is A disintegrin and metalloproteinase with thrombospondin motifs 7 (1595 aa).

An N-terminal signal peptide occupies residues 1–20 (MHRGLNLLLILCALAPHVLG). Positions 21 to 217 (PASGLPTEGR…QRQQKRRQQR (197 aa)) are excised as a propeptide. N-linked (GlcNAc...) asparagine glycosylation is found at N84 and N105. The tract at residues 165 to 218 (PGHAQPHMVYKHKRSGQQDDSRTSGTCGVQGSPELKHQREHWEQRQQKRRQQRS) is disordered. A Cysteine switch motif is present at residues 189-196 (GTCGVQGS). Residue C191 participates in Zn(2+) binding. Residues 198 to 210 (ELKHQREHWEQRQ) show a composition bias toward basic and acidic residues. Positions 223-434 (KWVETLVVAD…GWGLCLDDRP (212 aa)) constitute a Peptidase M12B domain. 11 cysteine pairs are disulfide-bonded: C299/C353, C328/C335, C347/C429, C386/C413, C456/C479, C467/C485, C474/C504, C498/C509, C532/C569, C536/C574, and C547/C559. Zn(2+) is bound at residue H369. E370 is a catalytic residue. Positions 373 and 379 each coordinate Zn(2+). In terms of domain architecture, Disintegrin spans 444-519 (VLPGVLYDVN…VPEGFQPETV (76 aa)). The 56-residue stretch at 520–575 (DGGWSGWSAWSVCSRSCGVGVRSSERQCTQPVPKNKGKYCVGERKRYRLCNLQACP) folds into the TSP type-1 1 domain. Residue N619 is glycosylated (N-linked (GlcNAc...) asparagine). A spacer region spans residues 680-791 (HTVSRTFKEA…PGVHYKYTIQ (112 aa)). TSP type-1 domains follow at residues 801–860 (PEFS…EPCP), 861–917 (ARWW…IPCY), and 922–975 (CPSS…QPCQ). 4 disordered regions span residues 989-1035 (GSSS…LDPP), 1077-1121 (PPHI…SHSP), 1179-1234 (REDT…LSPD), and 1255-1315 (KPVH…APTD). 2 stretches are compositionally biased toward pro residues: residues 1005–1015 (QPVPRPSPASS) and 1079–1089 (HIRPTEPPSDS). Low complexity predominate over residues 1220 to 1232 (SSPSNSTTQASLS). A compositionally biased stretch (polar residues) spans 1268–1280 (QIQTPHTEGTQSP). TSP type-1 domains follow at residues 1320 to 1368 (KNAS…RHCH), 1371 to 1431 (PCAA…QPCL), 1433 to 1476 (WYTS…PCNT), and 1478 to 1538 (PCTQ…EDCE). The 41-residue stretch at 1541 to 1581 (EPSRCERDRLPFNFCETLRLLGRCQLPTIRAQCCRSCPPLS) folds into the PLAC domain.

Interacts with COMP. The cofactor is Zn(2+). Post-translationally, glycosylated. Can be O-fucosylated by POFUT2 on a serine or a threonine residue found within the consensus sequence C1-X(2)-(S/T)-C2-G of the TSP type-1 repeat domains where C1 and C2 are the first and second cysteine residue of the repeat, respectively. Fucosylated repeats can then be further glycosylated by the addition of a beta-1,3-glucose residue by the glucosyltransferase, B3GALTL. Fucosylation mediates the efficient secretion of ADAMTS family members. Can also be C-glycosylated with one or two mannose molecules on tryptophan residues within the consensus sequence W-X-X-W of the TPRs. N- and C-glycosylations can also facilitate secretion. O-glycosylated proteoglycan; contains chondroitin sulfate. In terms of processing, may be cleaved by a furin endopeptidase. The precursor is sequentially processed. As to expression, detected in liver, ovary, kidney, testicle, lung and embryo.

The protein resides in the secreted. It is found in the extracellular space. The protein localises to the extracellular matrix. Functionally, metalloprotease. Was previously shown to degrade COMP. However, a later study found no activity against COMP. The protein is A disintegrin and metalloproteinase with thrombospondin motifs 7 (Adamts7) of Rattus norvegicus (Rat).